The primary structure comprises 468 residues: ATP synthase subunit beta (468 aa).

Residue 155–162 (GGAGVGKT) coordinates ATP.

Belongs to the ATPase alpha/beta chains family. In terms of assembly, F-type ATPases have 2 components, CF(1) - the catalytic core - and CF(0) - the membrane proton channel. CF(1) has five subunits: alpha(3), beta(3), gamma(1), delta(1), epsilon(1). CF(0) has three main subunits: a(1), b(2) and c(9-12). The alpha and beta chains form an alternating ring which encloses part of the gamma chain. CF(1) is attached to CF(0) by a central stalk formed by the gamma and epsilon chains, while a peripheral stalk is formed by the delta and b chains.

It localises to the cell membrane. It catalyses the reaction ATP + H2O + 4 H(+)(in) = ADP + phosphate + 5 H(+)(out). Produces ATP from ADP in the presence of a proton gradient across the membrane. The catalytic sites are hosted primarily by the beta subunits. This is ATP synthase subunit beta from Streptococcus thermophilus (strain ATCC BAA-250 / LMG 18311).